The primary structure comprises 303 residues: MESALLSILTLVIIAEFVIGNLSNGFXVLINCIDWVSKRQLSSVDKILTFLAISRIGLIWELLVSWFLGLHYLAIFVSGTGLRIMIFSWVVSNHFSLWLATILSIFYLLKIASFSSPAFLYLKWRVNQVILMILLGTLVFLFLNLIQINIHIKDWLDRCERNTIWNFSMSGLPTFSVPVKFTMTMFSLAPFTVALISFLLLIFSLRKHLQKMQLNYKGHREPRTKAHINALKIVISFLLLYASFFLCILISWISELYQNTLIHMFCQTIGVFYPSSHSFLLILGNPKLRQASLLVAAKVWAKR.

Residues 1-7 lie on the Extracellular side of the membrane; it reads MESALLS. A helical transmembrane segment spans residues 8–28; that stretch reads ILTLVIIAEFVIGNLSNGFXV. Over 29 to 55 the chain is Cytoplasmic; the sequence is LINCIDWVSKRQLSSVDKILTFLAISR. A helical transmembrane segment spans residues 56-76; sequence IGLIWELLVSWFLGLHYLAIF. At 77–85 the chain is on the extracellular side; the sequence is VSGTGLRIM. Residues 86–106 traverse the membrane as a helical segment; that stretch reads IFSWVVSNHFSLWLATILSIF. The Cytoplasmic portion of the chain corresponds to 107–128; sequence YLLKIASFSSPAFLYLKWRVNQ. The chain crosses the membrane as a helical span at residues 129–149; it reads VILMILLGTLVFLFLNLIQIN. Topologically, residues 150 to 184 are extracellular; sequence IHIKDWLDRCERNTIWNFSMSGLPTFSVPVKFTMT. A glycan (N-linked (GlcNAc...) asparagine) is linked at N166. Residues 185–205 traverse the membrane as a helical segment; the sequence is MFSLAPFTVALISFLLLIFSL. Residues 206-232 lie on the Cytoplasmic side of the membrane; the sequence is RKHLQKMQLNYKGHREPRTKAHINALK. The helical transmembrane segment at 233–253 threads the bilayer; the sequence is IVISFLLLYASFFLCILISWI. Over 254–261 the chain is Extracellular; sequence SELYQNTL. The helical transmembrane segment at 262–282 threads the bilayer; the sequence is IHMFCQTIGVFYPSSHSFLLI. Topologically, residues 283 to 303 are cytoplasmic; sequence LGNPKLRQASLLVAAKVWAKR.

This sequence belongs to the G-protein coupled receptor T2R family.

It is found in the membrane. Functionally, receptor that may play a role in the perception of bitterness and is gustducin-linked. May play a role in sensing the chemical composition of the gastrointestinal content. The activity of this receptor may stimulate alpha gustducin, mediate PLC-beta-2 activation and lead to the gating of TRPM5. The chain is Taste receptor type 2 member 13 (TAS2R13) from Papio hamadryas (Hamadryas baboon).